We begin with the raw amino-acid sequence, 514 residues long: Maturase K (514 aa).

It belongs to the intron maturase 2 family. MatK subfamily.

The protein resides in the plastid. Its subcellular location is the chloroplast. Usually encoded in the trnK tRNA gene intron. Probably assists in splicing its own and other chloroplast group II introns. This is Maturase K from Erythronium grandiflorum (Yellow avalanche-lily).